Reading from the N-terminus, the 439-residue chain is MEGFVLAGTSSGVGKTVATLATLTALEDAGYQPQPAKAGPDFIDPSHHEALVDTPSRTLDPWLAGEDGMRRTYWRGTGDICVVEGVMGLYDGTKTSTAAVAEGLDLPVVLVVDAKAGMESVAATALGFAQYADRIGVDIEVAGILAQRAHGGRHADGIRDALPEDLTYFGRIPPMSDLEIPDRHLGLHMGSEAGLDRDALSTAAETIDIERLVETARAPPEVATTERNTGDSPADRRVAVAQDSAFCFIYPSVLERLRSEASVEPFSPVAGDSVPDADAIYLPGGYPELHGESLETGGTLDEIAVRAADGVPVYGECGGLMALSESLTTTDGDTYEMAGVLPADIEMQDRYQALDHVELEARADTVAATSGAHRRGHEFHYSAATLGSDASFAFDMVRGDGIDGEHDGLTEYSTIGTYCHCHGESGAFDRLLAVPSKDI.

The interval 214–235 is disordered; the sequence is ETARAPPEVATTERNTGDSPAD. Positions 237 to 428 constitute a GATase cobBQ-type domain; it reads RVAVAQDSAF…CHCHGESGAF (192 aa). The Nucleophile role is filled by cysteine 317.

The protein belongs to the CobB/CbiA family. Mg(2+) serves as cofactor.

It catalyses the reaction cob(II)yrinate + 2 L-glutamine + 2 ATP + 2 H2O = cob(II)yrinate a,c diamide + 2 L-glutamate + 2 ADP + 2 phosphate + 2 H(+). It participates in cofactor biosynthesis; adenosylcobalamin biosynthesis; cob(II)yrinate a,c-diamide from sirohydrochlorin (anaerobic route): step 10/10. Its function is as follows. Catalyzes the ATP-dependent amidation of the two carboxylate groups at positions a and c of cobyrinate, using either L-glutamine or ammonia as the nitrogen source. The chain is Cobyrinate a,c-diamide synthase from Haloarcula marismortui (strain ATCC 43049 / DSM 3752 / JCM 8966 / VKM B-1809) (Halobacterium marismortui).